A 280-amino-acid polypeptide reads, in one-letter code: Vitamin B12-binding protein (280 aa).

The N-terminal stretch at 1-27 is a signal peptide; it reads MMPLGLFPLPRAAAVLLISLLTLPAQA. One can recognise a Fe/B12 periplasmic-binding domain in the interval 30-277; sequence RVISLSPSTT…QMASIPTPVA (248 aa). Y57 contributes to the cyanocob(III)alamin binding site. The cysteines at positions 190 and 266 are disulfide-linked.

This sequence belongs to the BtuF family. The complex is composed of two ATP-binding proteins (BtuD), two transmembrane proteins (BtuC) and a solute-binding protein (BtuF).

It localises to the periplasm. Part of the ABC transporter complex BtuCDF involved in vitamin B12 import. Binds vitamin B12 and delivers it to the periplasmic surface of BtuC. The chain is Vitamin B12-binding protein from Yersinia pestis bv. Antiqua (strain Antiqua).